The primary structure comprises 74 residues: Transcription attenuation protein MtrB (74 aa).

Belongs to the MtrB family. In terms of assembly, oligomer of 11 identical subunits arranged in doughnut-like structure.

Required for transcription attenuation control in the Trp operon. This trans-acting factor seems to recognize a 10 bases nucleotide sequence in the Trp leader transcript causing transcription termination. Binds the leader RNA only in presence of L-tryptophan. The polypeptide is Transcription attenuation protein MtrB (mtrB) (Oceanobacillus iheyensis (strain DSM 14371 / CIP 107618 / JCM 11309 / KCTC 3954 / HTE831)).